Here is a 132-residue protein sequence, read N- to C-terminus: Small ribosomal subunit protein uS8 (132 aa).

Belongs to the universal ribosomal protein uS8 family. In terms of assembly, part of the 30S ribosomal subunit. Contacts proteins S5 and S12.

Its function is as follows. One of the primary rRNA binding proteins, it binds directly to 16S rRNA central domain where it helps coordinate assembly of the platform of the 30S subunit. This is Small ribosomal subunit protein uS8 from Granulibacter bethesdensis (strain ATCC BAA-1260 / CGDNIH1).